A 443-amino-acid chain; its full sequence is Chromosomal replication initiator protein DnaA (443 aa).

Positions 1-73 (MYGDHRQIWE…YDAASKATNK (73 aa)) are domain I, interacts with DnaA modulators. Residues 73 to 106 (KLYEIKILSEDEEEYREIKESIEKENLTESTTLS) form a domain II region. The tract at residues 107–323 (TLNPKYTFDT…GALIRIVAFS (217 aa)) is domain III, AAA+ region. Positions 151, 153, 154, and 155 each coordinate ATP. The segment at 324–443 (NLTKANIDLE…EELKKRIKGY (120 aa)) is domain IV, binds dsDNA.

It belongs to the DnaA family. Oligomerizes as a right-handed, spiral filament on DNA at oriC.

It localises to the cytoplasm. Its function is as follows. Plays an essential role in the initiation and regulation of chromosomal replication. ATP-DnaA binds to the origin of replication (oriC) to initiate formation of the DNA replication initiation complex once per cell cycle. Binds the DnaA box (a 9 base pair repeat at the origin) and separates the double-stranded (ds)DNA. Forms a right-handed helical filament on oriC DNA; dsDNA binds to the exterior of the filament while single-stranded (ss)DNA is stabiized in the filament's interior. The ATP-DnaA-oriC complex binds and stabilizes one strand of the AT-rich DNA unwinding element (DUE), permitting loading of DNA polymerase. After initiation quickly degrades to an ADP-DnaA complex that is not apt for DNA replication. Binds acidic phospholipids. In Thermoanaerobacter pseudethanolicus (strain ATCC 33223 / 39E) (Clostridium thermohydrosulfuricum), this protein is Chromosomal replication initiator protein DnaA.